A 184-amino-acid polypeptide reads, in one-letter code: Bacterial microcompartment shell protein PduT (184 aa).

BMC domains follow at residues 4–86 (AIGI…PAIS) and 96–182 (AVGI…RQMV). Residue cysteine 38 participates in [4Fe-4S] cluster binding.

This sequence belongs to the bacterial microcompartments protein family. As to quaternary structure, homotrimerizes to form a pseudohexamer with a large central pore, which is probably the binding site for the [4Fe-4S] center. Interacts with PduS. Originally suggested to be a homotetramer; this is incorrect. It depends on [4Fe-4S] cluster as a cofactor.

It is found in the bacterial microcompartment. It participates in polyol metabolism; 1,2-propanediol degradation. In terms of biological role, a minor shell protein of the bacterial microcompartment (BMC) dedicated to 1,2-propanediol (1,2-PD) degradation. Overexpression of this protein leads to cells with either deposits or having lamina-like structures in the cytoplasm. Not absolutely required to make artificial BMCs. May selectively transport specific metabolites. Functionally, expression of a cosmid containing the full 21-gene pdu operon in E.coli allows E.coli to grow on 1,2-propanediol (1,2-PD) with the appearance of bacterial microcompartments (BMC) in its cytoplasm. Its function is as follows. The 1,2-PD-specific bacterial microcompartment (BMC) concentrates low levels of 1,2-PD catabolic enzymes, concentrates volatile reaction intermediates thus enhancing pathway flux and keeps the level of toxic, mutagenic propionaldehyde low. This is Bacterial microcompartment shell protein PduT from Citrobacter freundii.